The sequence spans 335 residues: Glycerol-3-phosphate dehydrogenase [NAD(P)+] (335 aa).

Ser15, Tyr16, His36, and Lys110 together coordinate NADPH. Sn-glycerol 3-phosphate contacts are provided by Lys110, Gly139, and Thr141. Ala143 contributes to the NADPH binding site. Sn-glycerol 3-phosphate-binding residues include Lys195, Asp248, Ser258, Arg259, and Asn260. Lys195 (proton acceptor) is an active-site residue. An NADPH-binding site is contributed by Arg259. The NADPH site is built by Val283 and Glu285.

This sequence belongs to the NAD-dependent glycerol-3-phosphate dehydrogenase family.

Its subcellular location is the cytoplasm. It carries out the reaction sn-glycerol 3-phosphate + NAD(+) = dihydroxyacetone phosphate + NADH + H(+). The catalysed reaction is sn-glycerol 3-phosphate + NADP(+) = dihydroxyacetone phosphate + NADPH + H(+). It functions in the pathway membrane lipid metabolism; glycerophospholipid metabolism. Its function is as follows. Catalyzes the reduction of the glycolytic intermediate dihydroxyacetone phosphate (DHAP) to sn-glycerol 3-phosphate (G3P), the key precursor for phospholipid synthesis. This chain is Glycerol-3-phosphate dehydrogenase [NAD(P)+], found in Haemophilus influenzae (strain ATCC 51907 / DSM 11121 / KW20 / Rd).